A 169-amino-acid chain; its full sequence is Peptide deformylase (169 aa).

Fe cation-binding residues include Cys-91 and His-133. Glu-134 is a catalytic residue. A Fe cation-binding site is contributed by His-137.

Belongs to the polypeptide deformylase family. Fe(2+) is required as a cofactor.

The catalysed reaction is N-terminal N-formyl-L-methionyl-[peptide] + H2O = N-terminal L-methionyl-[peptide] + formate. Removes the formyl group from the N-terminal Met of newly synthesized proteins. Requires at least a dipeptide for an efficient rate of reaction. N-terminal L-methionine is a prerequisite for activity but the enzyme has broad specificity at other positions. This is Peptide deformylase from Pectobacterium atrosepticum (strain SCRI 1043 / ATCC BAA-672) (Erwinia carotovora subsp. atroseptica).